The chain runs to 713 residues: Polyribonucleotide nucleotidyltransferase (713 aa).

Residues aspartate 488 and aspartate 494 each coordinate Mg(2+). A KH domain is found at 555-614; that stretch reads PRIEVMNIPTDKIRDVIGSGGKVIREIVEKTGAKINIEDDGTVKIASSNGKEIEAAKKWI. An S1 motif domain is found at 624 to 692; that stretch reads GEIYEGTVVK…ERGKVRLSMK (69 aa).

It belongs to the polyribonucleotide nucleotidyltransferase family. Mg(2+) serves as cofactor.

The protein resides in the cytoplasm. The enzyme catalyses RNA(n+1) + phosphate = RNA(n) + a ribonucleoside 5'-diphosphate. Functionally, involved in mRNA degradation. Catalyzes the phosphorolysis of single-stranded polyribonucleotides processively in the 3'- to 5'-direction. This Brucella anthropi (strain ATCC 49188 / DSM 6882 / CCUG 24695 / JCM 21032 / LMG 3331 / NBRC 15819 / NCTC 12168 / Alc 37) (Ochrobactrum anthropi) protein is Polyribonucleotide nucleotidyltransferase.